A 219-amino-acid polypeptide reads, in one-letter code: Ribosome hibernation promotion factor (219 aa).

Belongs to the HPF/YfiA ribosome-associated protein family. Long HPF subfamily. In terms of assembly, interacts with 100S ribosomes.

The protein localises to the cytoplasm. Functionally, required for dimerization of active 70S ribosomes into 100S ribosomes in stationary phase; 100S ribosomes are translationally inactive and sometimes present during exponential growth. The protein is Ribosome hibernation promotion factor of Mycobacterium tuberculosis (strain ATCC 25618 / H37Rv).